The following is a 139-amino-acid chain: Putative pre-16S rRNA nuclease (139 aa).

This sequence belongs to the YqgF nuclease family.

It is found in the cytoplasm. Could be a nuclease involved in processing of the 5'-end of pre-16S rRNA. The protein is Putative pre-16S rRNA nuclease of Streptococcus mutans serotype c (strain ATCC 700610 / UA159).